A 393-amino-acid chain; its full sequence is Ferrochelatase, mitochondrial (393 aa).

A mitochondrion-targeting transit peptide spans M1–Q31. The active site involves D351.

The protein belongs to the ferrochelatase family. In terms of processing, the leader peptide may be processed in two proteolytic steps, first between Ser-23 and Phe-24, second and by a different protease, to yield the mature protein.

It is found in the mitochondrion inner membrane. It carries out the reaction heme b + 2 H(+) = protoporphyrin IX + Fe(2+). Its pathway is porphyrin-containing compound metabolism; protoheme biosynthesis; protoheme from protoporphyrin-IX: step 1/1. In terms of biological role, catalyzes the ferrous insertion into protoporphyrin IX. The sequence is that of Ferrochelatase, mitochondrial (HEM15) from Saccharomyces cerevisiae (strain ATCC 204508 / S288c) (Baker's yeast).